A 949-amino-acid chain; its full sequence is MKTDLLACRHIGVNKADAEVMLRKIGVASLDELIDKTIPANIRLKAPLALPAPMTEYEFARHIAELAGKNKLFTTYIGMGWYNTITPAVIQRNVFENPVWYTSYTPYQTEVSQGRLEALMNFQTAVCDLTAMPLANCSLLDEATAAAEAVTMMYGLRSRNQQKAGANVVFIDENIFPQTLAVITTRAIPQDIEIRTGKFRDLEFTDDLFACVLQYPNANGNAEDYREFTEKAHTANCKVAVAADILSLALLTPPGEWGADIVFGTTQRLGTPMFYGGPSAGYFATRDEYKRNMPGRIIGWSKDKYGKLCYRMALQTREQHIKREKATSNICTAQALLATMAGFYTVYHGQEGIRNIASRIHSITVFLEKSISKLGFKQVNKQYFDTLRFILPDSVSAQQIRTIALSKEVNLRYFDNGDVGLSIDETTDVAAANILLSIFAIAAGKDFQKVDDIPEATIISEELKRQTPYLTHEVFSKYHTETEMMRYIKRLDRKDISLAQSMISLGSCTMKLNAAAEMLPLSCAEFMCMHPLVPEDQAAGYRELIHNLSEELKVITGFAGVSLQPNSGAAGEYAGLRTIRAYLESIGQGHRNKVLIPASAHGTNPASAIQAGFTTVTCACDEHGNVDMDDLRAKAEENKDDLAALMITYPSTHGIFETEIVEICQIIHACGAQVYMDGANMNAQVGLTNPGFIGADVCHLNLHKTFASPHGGGGPGVGPICVAEHLVPFLPGHGLFGNSQNEVSAAPFGSAGILPITYGYIRMMGAEGLTMATKTAILNANYLAACLKDTYGIVYRGANGFVGHEMILECRKVYEETGISENDIAKRLMDYGYHAPTLSFPVHGTLMIEPTESESLSELDNFVLTMLTIWNEIQEVKNGEADKEDNVLINAPHPEYEVVSDQWEHCYTREKAAYPIESVRENKFWVNVARVDNTLGDRKLLPTCYGCFD.

Position 704 is an N6-(pyridoxal phosphate)lysine (lysine 704).

This sequence belongs to the GcvP family. The glycine cleavage system is composed of four proteins: P, T, L and H. The cofactor is pyridoxal 5'-phosphate.

It catalyses the reaction N(6)-[(R)-lipoyl]-L-lysyl-[glycine-cleavage complex H protein] + glycine + H(+) = N(6)-[(R)-S(8)-aminomethyldihydrolipoyl]-L-lysyl-[glycine-cleavage complex H protein] + CO2. Its function is as follows. The glycine cleavage system catalyzes the degradation of glycine. The P protein binds the alpha-amino group of glycine through its pyridoxal phosphate cofactor; CO(2) is released and the remaining methylamine moiety is then transferred to the lipoamide cofactor of the H protein. In Bacteroides fragilis (strain YCH46), this protein is Glycine dehydrogenase (decarboxylating).